The following is a 287-amino-acid chain: MMEKIRLILLSSRPISWINTAYPFGLAYLLNAGEIDWLFWLGIVFFLIPYNIAMYGINDVFDYESDMRNPRKGGVEGAVLPKSSHSTLLWASAISTIPFLVILFIFGTWMSSLWLTLSVLAVIAYSAPKLRFKERPFIDALTSSTHFTSPALIGATITGTSPSAAMWIALGSFFLWGMASQILGAVQDVNADREANLSSIATVIGARGAIRLSVVLYLLAAVLVTTLPNPAWIIGIAILTYVFNAARFWNITDASCEQANRSWKVFLWLNYFVGAVITILLIAIHQI.

The next 7 membrane-spanning stretches (helical) occupy residues Ile15–Ile35, Trp37–Ile57, Thr87–Gly107, Phe137–Ile157, Met166–Val186, Leu218–Ile238, and Val265–His285.

The protein belongs to the UbiA prenyltransferase family.

The protein localises to the cell membrane. It catalyses the reaction all-trans-lycopene + dimethylallyl diphosphate + A + H2O = nonaflavuxanthin + AH2 + diphosphate. The enzyme catalyses nonaflavuxanthin + dimethylallyl diphosphate + A + H2O = flavuxanthin + AH2 + diphosphate. It functions in the pathway carotenoid biosynthesis. In terms of biological role, catalyzes the elongation of the C(40) carotenoid all-trans-lycopene to the acyclic C(50) carotenoid flavuxanthin during decaprenoxanthin biosynthesis. Acts as a bifunctional enzyme that catalyzes the elongation of lycopene by attaching a C(5) isoprene unit at C-2, as well as the hydroxylation of the new isoprene unit. The enzyme acts at both ends of the substrate, forming the C(50) carotenoid flavuxanthin via the C(45) intermediate nonaflavuxanthin. The polypeptide is Lycopene elongase/hydratase (Corynebacterium glutamicum (strain ATCC 13032 / DSM 20300 / JCM 1318 / BCRC 11384 / CCUG 27702 / LMG 3730 / NBRC 12168 / NCIMB 10025 / NRRL B-2784 / 534)).